A 146-amino-acid chain; its full sequence is Snake venom vascular endothelial growth factor toxin TfsvVEGF (146 aa).

An N-terminal signal peptide occupies residues 1–24 (MAAYLLAVAILFCIQGWPSGTVQG). The residue at position 25 (glutamine 25) is a Pyrrolidone carboxylic acid. Disulfide bonds link cysteine 38–cysteine 80, cysteine 69–cysteine 115, and cysteine 73–cysteine 117. Positions 118-139 (RPRSPGDVNNGKDKRNPEEGGP) are enriched in basic and acidic residues. The segment at 118-146 (RPRSPGDVNNGKDKRNPEEGGPRARFPFV) is disordered.

Belongs to the PDGF/VEGF growth factor family. Snake venom VEGF subfamily. Homodimer; disulfide-linked. Interacts with VEGF receptor-1 (FLT1) with a high affinity, whereas it binds to VEGF receptor-2 (KDR) with a low affinity. Does not bind VEGF receptor-3 (FLT4). Expressed by the venom gland.

It is found in the secreted. Snake venom VEGFs may contribute to venom dispersion and prey subjugation by inducing vascular permeability and hypotension. This protein strongly increases vascular permeability, and weakly stimulates angiogenesis. Interacts with VEGF receptor-1 (FLT1) with a high affinity, whereas it binds to VEGF receptor-2 (KDR) with a low affinity. Stimulates autophosphorylation of VEGF receptor-1 (VEGFR-1/FLT1), and VEGF receptor-2 (VEGFR-2/KDR). The chain is Snake venom vascular endothelial growth factor toxin TfsvVEGF from Protobothrops flavoviridis (Habu).